A 106-amino-acid chain; its full sequence is MICOS complex subunit MIC12 (106 aa).

Residues 11–27 (VKWTLSVGVIGSVFYLY) traverse the membrane as a helical segment.

The protein belongs to the MICOS complex subunit Mic12 family. Component of the mitochondrial contact site and cristae organizing system (MICOS) complex.

It is found in the mitochondrion inner membrane. Its function is as follows. Component of the MICOS complex, a large protein complex of the mitochondrial inner membrane that plays crucial roles in the maintenance of crista junctions, inner membrane architecture, and formation of contact sites to the outer membrane. The sequence is that of MICOS complex subunit MIC12 (AIM5) from Saccharomyces cerevisiae (strain RM11-1a) (Baker's yeast).